We begin with the raw amino-acid sequence, 269 residues long: Small ribosomal subunit protein uS2 (269 aa).

Residues 228–269 (ARAERQAAAAKDAAGDTGKSEADAEAVKAEAAAEEKAETTEA) form a disordered region. Residues 233-244 (QAAAAKDAAGDT) show a composition bias toward low complexity. The segment covering 245–269 (GKSEADAEAVKAEAAAEEKAETTEA) has biased composition (basic and acidic residues).

The protein belongs to the universal ribosomal protein uS2 family.

This is Small ribosomal subunit protein uS2 from Corynebacterium urealyticum (strain ATCC 43042 / DSM 7109).